The following is a 482-amino-acid chain: Methylenetetrahydrofolate--tRNA-(uracil-5-)-methyltransferase TrmFO (482 aa).

11–16 (GAGLAG) is a binding site for FAD.

It belongs to the MnmG family. TrmFO subfamily. The cofactor is FAD.

Its subcellular location is the cytoplasm. The enzyme catalyses uridine(54) in tRNA + (6R)-5,10-methylene-5,6,7,8-tetrahydrofolate + NADH + H(+) = 5-methyluridine(54) in tRNA + (6S)-5,6,7,8-tetrahydrofolate + NAD(+). It carries out the reaction uridine(54) in tRNA + (6R)-5,10-methylene-5,6,7,8-tetrahydrofolate + NADPH + H(+) = 5-methyluridine(54) in tRNA + (6S)-5,6,7,8-tetrahydrofolate + NADP(+). Functionally, catalyzes the folate-dependent formation of 5-methyl-uridine at position 54 (M-5-U54) in all tRNAs. The protein is Methylenetetrahydrofolate--tRNA-(uracil-5-)-methyltransferase TrmFO of Nitratidesulfovibrio vulgaris (strain DP4) (Desulfovibrio vulgaris).